Reading from the N-terminus, the 338-residue chain is Phenylalanine--tRNA ligase alpha subunit (338 aa).

Residue glutamate 253 participates in Mg(2+) binding.

The protein belongs to the class-II aminoacyl-tRNA synthetase family. Phe-tRNA synthetase alpha subunit type 1 subfamily. Tetramer of two alpha and two beta subunits. It depends on Mg(2+) as a cofactor.

Its subcellular location is the cytoplasm. It catalyses the reaction tRNA(Phe) + L-phenylalanine + ATP = L-phenylalanyl-tRNA(Phe) + AMP + diphosphate + H(+). The chain is Phenylalanine--tRNA ligase alpha subunit from Trichlorobacter lovleyi (strain ATCC BAA-1151 / DSM 17278 / SZ) (Geobacter lovleyi).